The primary structure comprises 457 residues: Non-structural protein V (457 aa).

Disordered regions lie at residues 26–104 and 193–403; these read KTYG…DPDD and FVPK…MPIK. 2 stretches are compositionally biased toward polar residues: residues 28 to 37 and 77 to 96; these read YGRSSIQQPS and DLSS…SNTR. A compositionally biased stretch (acidic residues) spans 240-252; it reads SDDEDENQLEYED. Ser257 is modified (phosphoserine; by host). Residues 296–317 are compositionally biased toward basic and acidic residues; the sequence is FPEKEETPDVRRKDSLMQDSCK. Phosphoserine; by host is present on Ser350. Residues His406, Cys425, Cys429, Cys441, Cys443, Cys446, Cys450, and Cys453 each contribute to the Zn(2+) site.

The protein belongs to the paramyxoviruses V protein family. Interacts with host IFIH1/MDA5, DHX58/LGP2, STAT1 and STAT2.

It localises to the host cytoplasm. Its function is as follows. Plays an essential role in the inhibition of host immune response. Prevents the establishment of cellular antiviral state by blocking interferon-alpha/beta (IFN-alpha/beta) production and signaling pathway. Interacts with host IFIH1/MDA5 and DHX58/LGP2 to inhibit the transduction pathway involved in the activation of IFN-beta promoter, thus protecting the virus against cell antiviral state. Blocks the type I interferon signaling pathway by interacting with host STAT1 and STAT2 and thereby inhibiting their phosphorylation and subsequent nuclear translocation. Efficiently blocks the type II interferon signaling pathway. In Hendra virus (isolate Horse/Autralia/Hendra/1994), this protein is Non-structural protein V (P/V/C).